The primary structure comprises 126 residues: Fluoride-specific ion channel FluC (126 aa).

Helical transmembrane passes span 5–25 (LHFL…WLLG), 35–55 (WGTL…LGLI), 68–88 (ALVT…AEVV), and 99–119 (AAGY…LGLA). Residues G75 and T78 each contribute to the Na(+) site.

Belongs to the fluoride channel Fluc/FEX (TC 1.A.43) family.

It localises to the cell inner membrane. It catalyses the reaction fluoride(in) = fluoride(out). Its activity is regulated as follows. Na(+) is not transported, but it plays an essential structural role and its presence is essential for fluoride channel function. In terms of biological role, fluoride-specific ion channel. Important for reducing fluoride concentration in the cell, thus reducing its toxicity. This is Fluoride-specific ion channel FluC from Bordetella avium (strain 197N).